The primary structure comprises 387 residues: Galactokinase (387 aa).

32 to 35 (EHTD) contacts substrate. ATP contacts are provided by residues Ser66 and 123 to 129 (GAGLSSS). Positions 129 and 161 each coordinate Mg(2+). The Proton acceptor role is filled by Asp173. Tyr223 lines the substrate pocket.

It belongs to the GHMP kinase family. GalK subfamily.

Its subcellular location is the cytoplasm. The enzyme catalyses alpha-D-galactose + ATP = alpha-D-galactose 1-phosphate + ADP + H(+). It functions in the pathway carbohydrate metabolism; galactose metabolism. Functionally, catalyzes the transfer of the gamma-phosphate of ATP to D-galactose to form alpha-D-galactose-1-phosphate (Gal-1-P). In Enterococcus faecalis (strain ATCC 700802 / V583), this protein is Galactokinase.